The chain runs to 598 residues: UvrABC system protein C (598 aa).

The GIY-YIG domain maps to 14 to 91 (DSPGCYLHKD…IQKNMPKYNI (78 aa)). A UVR domain is found at 196–231 (DKIIEDLRSKMLAASEEMAFERAAEYRDLISGIATM).

The protein belongs to the UvrC family. As to quaternary structure, interacts with UvrB in an incision complex.

It is found in the cytoplasm. Functionally, the UvrABC repair system catalyzes the recognition and processing of DNA lesions. UvrC both incises the 5' and 3' sides of the lesion. The N-terminal half is responsible for the 3' incision and the C-terminal half is responsible for the 5' incision. The protein is UvrABC system protein C of Streptococcus pyogenes serotype M28 (strain MGAS6180).